The following is a 458-amino-acid chain: NADH-ubiquinone oxidoreductase chain 4 (458 aa).

13 helical membrane passes run F22 to T42, M63 to S83, L96 to T116, N117 to F137, I150 to L170, I194 to L214, T224 to I244, L257 to L277, A284 to L306, G311 to N333, M350 to P370, L391 to L413, and L434 to I454.

The protein belongs to the complex I subunit 4 family.

The protein resides in the mitochondrion membrane. The catalysed reaction is a ubiquinone + NADH + 5 H(+)(in) = a ubiquinol + NAD(+) + 4 H(+)(out). In terms of biological role, core subunit of the mitochondrial membrane respiratory chain NADH dehydrogenase (Complex I) that is believed to belong to the minimal assembly required for catalysis. Complex I functions in the transfer of electrons from NADH to the respiratory chain. The immediate electron acceptor for the enzyme is believed to be ubiquinone. The protein is NADH-ubiquinone oxidoreductase chain 4 (MT-ND4) of Myxine glutinosa (Atlantic hagfish).